The sequence spans 207 residues: MPKVALYNQNGSTAGDIELNASVFGIEPNESVVFDAILMQRASLRQGTHKVKNRSEVRGGGRKPWRQKGTGRARQGSIRSPQWRGGGVVFGPTPRSYSYKLPKKVRRLAIKSVLSSKVIDNNIIVLEDLTLDTAKTKEMAAILKGLSVEKKALIVTADANEAVALSARNIPGVTVVEANGINVLDVVNHEKLLITKAAVEKVEEVLA.

A disordered region spans residues 48–85 (THKVKNRSEVRGGGRKPWRQKGTGRARQGSIRSPQWRG). Basic residues predominate over residues 60–71 (GGRKPWRQKGTG).

This sequence belongs to the universal ribosomal protein uL4 family. Part of the 50S ribosomal subunit.

One of the primary rRNA binding proteins, this protein initially binds near the 5'-end of the 23S rRNA. It is important during the early stages of 50S assembly. It makes multiple contacts with different domains of the 23S rRNA in the assembled 50S subunit and ribosome. Its function is as follows. Forms part of the polypeptide exit tunnel. The protein is Large ribosomal subunit protein uL4 of Bacillus subtilis (strain 168).